A 105-amino-acid chain; its full sequence is Keratin-associated protein 17-1 (105 aa).

As to quaternary structure, interacts with hair keratins.

In terms of biological role, in the hair cortex, hair keratin intermediate filaments are embedded in an interfilamentous matrix, consisting of hair keratin-associated proteins (KRTAP), which are essential for the formation of a rigid and resistant hair shaft through their extensive disulfide bond cross-linking with abundant cysteine residues of hair keratins. The matrix proteins include the high-sulfur and high-glycine-tyrosine keratins. In Homo sapiens (Human), this protein is Keratin-associated protein 17-1 (KRTAP17-1).